The sequence spans 128 residues: Glycine cleavage system H protein (128 aa).

The Lipoyl-binding domain maps to 24–105 (SLTIGVTDHA…AYAAWLFKLK (82 aa)). Position 65 is an N6-lipoyllysine (Lys65).

The protein belongs to the GcvH family. The glycine cleavage system is composed of four proteins: P, T, L and H. The cofactor is (R)-lipoate.

The glycine cleavage system catalyzes the degradation of glycine. The H protein shuttles the methylamine group of glycine from the P protein to the T protein. In Aromatoleum aromaticum (strain DSM 19018 / LMG 30748 / EbN1) (Azoarcus sp. (strain EbN1)), this protein is Glycine cleavage system H protein.